The primary structure comprises 437 residues: Trypacidin cluster transcriptional coactivator tpcD (437 aa).

An HTH iclR-type domain is found at 75–144 (LAVQSQLLSC…PQRGHVAHSP (70 aa)). Positions 105–124 (IADLARLSGVPEAQLARIIR) form a DNA-binding region, H-T-H motif.

Specifically expressed in conidia.

It is found in the nucleus. Its function is as follows. Transcriptional coactivator; part of the gene cluster that mediates the biosynthesis of trypacidin, a mycotoxin with antiprotozoal activity and that plays a role in the infection process. With tpcE, coregulates the production of trypacidin. In Aspergillus fumigatus (strain ATCC MYA-4609 / CBS 101355 / FGSC A1100 / Af293) (Neosartorya fumigata), this protein is Trypacidin cluster transcriptional coactivator tpcD.